The following is a 237-amino-acid chain: Ribonuclease PH (237 aa).

Phosphate-binding positions include arginine 86 and 124–126; that span reads GTR.

This sequence belongs to the RNase PH family. As to quaternary structure, homohexameric ring arranged as a trimer of dimers.

The enzyme catalyses tRNA(n+1) + phosphate = tRNA(n) + a ribonucleoside 5'-diphosphate. In terms of biological role, phosphorolytic 3'-5' exoribonuclease that plays an important role in tRNA 3'-end maturation. Removes nucleotide residues following the 3'-CCA terminus of tRNAs; can also add nucleotides to the ends of RNA molecules by using nucleoside diphosphates as substrates, but this may not be physiologically important. Probably plays a role in initiation of 16S rRNA degradation (leading to ribosome degradation) during starvation. The chain is Ribonuclease PH from Nitrobacter hamburgensis (strain DSM 10229 / NCIMB 13809 / X14).